A 333-amino-acid polypeptide reads, in one-letter code: Biotin synthase (333 aa).

The 230-residue stretch at 46–275 (YYGKKVKLNM…TKEIRISGGR (230 aa)) folds into the Radical SAM core domain. Cys-64, Cys-68, and Cys-71 together coordinate [4Fe-4S] cluster. [2Fe-2S] cluster-binding residues include Cys-108, Cys-140, Cys-200, and Arg-270.

The protein belongs to the radical SAM superfamily. Biotin synthase family. Homodimer. [4Fe-4S] cluster serves as cofactor. It depends on [2Fe-2S] cluster as a cofactor.

It carries out the reaction (4R,5S)-dethiobiotin + (sulfur carrier)-SH + 2 reduced [2Fe-2S]-[ferredoxin] + 2 S-adenosyl-L-methionine = (sulfur carrier)-H + biotin + 2 5'-deoxyadenosine + 2 L-methionine + 2 oxidized [2Fe-2S]-[ferredoxin]. It participates in cofactor biosynthesis; biotin biosynthesis; biotin from 7,8-diaminononanoate: step 2/2. In terms of biological role, catalyzes the conversion of dethiobiotin (DTB) to biotin by the insertion of a sulfur atom into dethiobiotin via a radical-based mechanism. The polypeptide is Biotin synthase (Halalkalibacterium halodurans (strain ATCC BAA-125 / DSM 18197 / FERM 7344 / JCM 9153 / C-125) (Bacillus halodurans)).